A 347-amino-acid chain; its full sequence is Ketol-acid reductoisomerase (NADP(+)) (347 aa).

The region spanning 3–182 (TKMFYDKDID…GSGCAGILET (180 aa)) is the KARI N-terminal Rossmann domain. NADP(+) contacts are provided by residues 26–29 (YGAQ), Arg49, Ser53, and 83–86 (DELQ). Residue His108 is part of the active site. An NADP(+)-binding site is contributed by Gly134. Positions 183–328 (TFEEETTEDL…KKVRAMMPWI (146 aa)) constitute a KARI C-terminal knotted domain. Residues Asp191, Glu195, Glu227, and Glu231 each coordinate Mg(2+). Residue Ser252 coordinates substrate.

This sequence belongs to the ketol-acid reductoisomerase family. The cofactor is Mg(2+).

The enzyme catalyses (2R)-2,3-dihydroxy-3-methylbutanoate + NADP(+) = (2S)-2-acetolactate + NADPH + H(+). The catalysed reaction is (2R,3R)-2,3-dihydroxy-3-methylpentanoate + NADP(+) = (S)-2-ethyl-2-hydroxy-3-oxobutanoate + NADPH + H(+). Its pathway is amino-acid biosynthesis; L-isoleucine biosynthesis; L-isoleucine from 2-oxobutanoate: step 2/4. It functions in the pathway amino-acid biosynthesis; L-valine biosynthesis; L-valine from pyruvate: step 2/4. Functionally, involved in the biosynthesis of branched-chain amino acids (BCAA). Catalyzes an alkyl-migration followed by a ketol-acid reduction of (S)-2-acetolactate (S2AL) to yield (R)-2,3-dihydroxy-isovalerate. In the isomerase reaction, S2AL is rearranged via a Mg-dependent methyl migration to produce 3-hydroxy-3-methyl-2-ketobutyrate (HMKB). In the reductase reaction, this 2-ketoacid undergoes a metal-dependent reduction by NADPH to yield (R)-2,3-dihydroxy-isovalerate. This chain is Ketol-acid reductoisomerase (NADP(+)), found in Leuconostoc mesenteroides subsp. cremoris.